The chain runs to 349 residues: 5-deoxyribose 1-phosphate isomerase (349 aa).

Substrate contacts are provided by residues 49–51 (RGA), Arg-92, and Gln-199. The Proton donor role is filled by Asp-240. Residue 250 to 251 (NK) participates in substrate binding.

The protein belongs to the EIF-2B alpha/beta/delta subunits family. DrdI subfamily.

It carries out the reaction 5-deoxy-alpha-D-ribose 1-phosphate = 5-deoxy-D-ribulose 1-phosphate. It participates in carbohydrate degradation. In terms of biological role, catalyzes the isomerization of 5-deoxy-alpha-D-ribose 1-phosphate to 5-deoxy-D-ribulose 1-phosphate, as part of a 5-deoxyribose salvage pathway that recycles this toxic radical SAM enzyme by-product to mainstream metabolites. The polypeptide is 5-deoxyribose 1-phosphate isomerase (Clostridium botulinum (strain 657 / Type Ba4)).